The following is a 306-amino-acid chain: F-box/LRR-repeat protein At3g26922 (306 aa).

In terms of domain architecture, F-box spans 13–73 (EDRISDLPEA…QSEDETYSEI (61 aa)). LRR repeat units follow at residues 67–93 (DETY…HLGF), 98–122 (CRSV…VLHV), 138–170 (CETL…RLEN), 171–196 (VDYK…VVYR), 215–243 (LTIY…KIDG), and 263–288 (IMNV…SLAL).

This Arabidopsis thaliana (Mouse-ear cress) protein is F-box/LRR-repeat protein At3g26922.